Here is a 207-residue protein sequence, read N- to C-terminus: Guanylate kinase (207 aa).

Positions 4–184 (GLLFIVSAPS…AVSDLYKIIR (181 aa)) constitute a Guanylate kinase-like domain. Residue 11–18 (APSGTGKS) participates in ATP binding.

Belongs to the guanylate kinase family.

It is found in the cytoplasm. It catalyses the reaction GMP + ATP = GDP + ADP. Its function is as follows. Essential for recycling GMP and indirectly, cGMP. This Buchnera aphidicola subsp. Baizongia pistaciae (strain Bp) protein is Guanylate kinase.